A 102-amino-acid chain; its full sequence is RNA-binding protein Hfq (102 aa).

The Sm domain occupies D9–V68. A disordered region spans residues V63 to E102. The span at H70–G86 shows a compositional bias: low complexity.

It belongs to the Hfq family. Homohexamer.

In terms of biological role, RNA chaperone that binds small regulatory RNA (sRNAs) and mRNAs to facilitate mRNA translational regulation in response to envelope stress, environmental stress and changes in metabolite concentrations. Also binds with high specificity to tRNAs. The protein is RNA-binding protein Hfq of Klebsiella pneumoniae (strain 342).